Consider the following 444-residue polypeptide: Proline--tRNA ligase (444 aa).

It belongs to the class-II aminoacyl-tRNA synthetase family. ProS type 2 subfamily. In terms of assembly, homodimer.

The protein resides in the cytoplasm. It carries out the reaction tRNA(Pro) + L-proline + ATP = L-prolyl-tRNA(Pro) + AMP + diphosphate. In terms of biological role, catalyzes the attachment of proline to tRNA(Pro) in a two-step reaction: proline is first activated by ATP to form Pro-AMP and then transferred to the acceptor end of tRNA(Pro). This is Proline--tRNA ligase from Bradyrhizobium sp. (strain BTAi1 / ATCC BAA-1182).